A 106-amino-acid polypeptide reads, in one-letter code: uncharacterized protein (106 aa).

This is an uncharacterized protein from Escherichia coli O6:H1 (strain CFT073 / ATCC 700928 / UPEC).